A 697-amino-acid polypeptide reads, in one-letter code: Elongation factor G (697 aa).

The 281-residue stretch at 10-290 (THFRNIGIAA…AVVDYLPSPL (281 aa)) folds into the tr-type G domain. Residues 19 to 26 (AHIDAGKT), 89 to 93 (DTPGH), and 143 to 146 (NKMD) contribute to the GTP site.

The protein belongs to the TRAFAC class translation factor GTPase superfamily. Classic translation factor GTPase family. EF-G/EF-2 subfamily.

It is found in the cytoplasm. Functionally, catalyzes the GTP-dependent ribosomal translocation step during translation elongation. During this step, the ribosome changes from the pre-translocational (PRE) to the post-translocational (POST) state as the newly formed A-site-bound peptidyl-tRNA and P-site-bound deacylated tRNA move to the P and E sites, respectively. Catalyzes the coordinated movement of the two tRNA molecules, the mRNA and conformational changes in the ribosome. The sequence is that of Elongation factor G from Deinococcus deserti (strain DSM 17065 / CIP 109153 / LMG 22923 / VCD115).